A 208-amino-acid chain; its full sequence is Large ribosomal subunit protein uL3 (208 aa).

The segment at 116–148 (GFQGVIKRHGQSRGPMAHGSRYHRRPGSMGPVA) is disordered.

The protein belongs to the universal ribosomal protein uL3 family. In terms of assembly, part of the 50S ribosomal subunit. Forms a cluster with proteins L14 and L19.

Functionally, one of the primary rRNA binding proteins, it binds directly near the 3'-end of the 23S rRNA, where it nucleates assembly of the 50S subunit. The protein is Large ribosomal subunit protein uL3 of Streptococcus pyogenes serotype M12 (strain MGAS2096).